The sequence spans 142 residues: Glia maturation factor gamma (142 aa).

S2 carries the N-acetylserine modification. Positions 4 to 139 (SLVVCEVDPE…TETWLKEKLA (136 aa)) constitute an ADF-H domain.

This sequence belongs to the actin-binding proteins ADF family. GMF subfamily.

In Mus musculus (Mouse), this protein is Glia maturation factor gamma (Gmfg).